The following is a 66-amino-acid chain: Clusterin (66 aa).

This sequence belongs to the clusterin family. As to quaternary structure, antiparallel disulfide-linked heterodimer of an alpha chain and a beta chain. Self-associates and forms higher oligomers. Interacts with a broad range of misfolded proteins, including APP, APOC2 and LYZ. Slightly acidic pH promotes interaction with misfolded proteins. Forms high-molecular weight oligomers upon interaction with misfolded proteins. Interacts with APOA1, LRP2, CLUAP1 and PON1. Interacts with the complement membrane attack complex. Interacts (via alpha chain) with XRCC6. Interacts with SYVN1, COMMD1, BTRC, CUL1 and with ubiquitin and SCF (SKP1-CUL1-F-box protein) E3 ubiquitin-protein ligase complexes. Interacts (via alpha chain) with BAX in stressed cells, where BAX undergoes a conformation change leading to association with the mitochondrial membrane. Does not interact with BAX in unstressed cells. Found in a complex with LTF, CLU, EPPIN and SEMG1. Interacts (immaturely glycosylated pre-secreted form) with HSPA5; this interaction promotes CLU stability and facilitates stress-induced CLU retrotranslocation from the secretory pathway to the mitochondria, thereby reducing stress-induced apoptosis by stabilizing mitochondrial membrane integrity. Interacts with BCL2L1; this interaction releases and activates BAX and promotes cell death. Interacts with TGFBR2 and ACVR1. Interacts (secreted form) with STMN3; this interaction may act as an important modulator during neuronal differentiation. Component of a epididymal complex at least composed of soluble form of prion protein PRNP, CLU, BPI, CES5A, MANBA and GLB1. In terms of processing, proteolytically cleaved on its way through the secretory system, probably within the Golgi lumen. Proteolytic cleavage is not necessary for its chaperone activity. All non-secreted forms are not proteolytically cleaved. Chaperone activity of uncleaved forms is dependent on a non-reducing environment. Post-translationally, polyubiquitinated, leading to proteasomal degradation. Under cellular stress, the intracellular level of cleaved form is reduced due to proteasomal degradation. Heavily N-glycosylated. About 30% of the protein mass is comprised of complex N-linked carbohydrate. Endoplasmic reticulum (ER) stress induces changes in glycosylation status and increases level of hypoglycosylated forms. Core carbohydrates are essential for chaperone activity. Non-secreted forms are hypoglycosylated or unglycosylated.

The protein resides in the secreted. It localises to the nucleus. It is found in the cytoplasm. Its subcellular location is the mitochondrion membrane. The protein localises to the cytosol. The protein resides in the microsome. It localises to the endoplasmic reticulum. It is found in the mitochondrion. Its subcellular location is the perinuclear region. The protein localises to the cytoplasmic vesicle. The protein resides in the secretory vesicle. It localises to the chromaffin granule. In terms of biological role, functions as extracellular chaperone that prevents aggregation of non native proteins. Prevents stress-induced aggregation of blood plasma proteins. Inhibits formation of amyloid fibrils by APP, APOC2, B2M, CALCA, CSN3, SNCA and aggregation-prone LYZ variants (in vitro). Does not require ATP. Maintains partially unfolded proteins in a state appropriate for subsequent refolding by other chaperones, such as HSPA8/HSC70. Does not refold proteins by itself. Binding to cell surface receptors triggers internalization of the chaperone-client complex and subsequent lysosomal or proteasomal degradation. When secreted, protects cells against apoptosis and against cytolysis by complement: inhibits assembly of the complement membrane attack complex (MAC) by preventing polymerization of C9 pore component of the MAC complex. Intracellular forms interact with ubiquitin and SCF (SKP1-CUL1-F-box protein) E3 ubiquitin-protein ligase complexes and promote the ubiquitination and subsequent proteasomal degradation of target proteins. Promotes proteasomal degradation of COMMD1 and IKBKB. Modulates NF-kappa-B transcriptional activity. Following stress, promotes apoptosis. Inhibits apoptosis when associated with the mitochondrial membrane by interference with BAX-dependent release of cytochrome c into the cytoplasm. Plays a role in the regulation of cell proliferation. An intracellular form suppresses stress-induced apoptosis by stabilizing mitochondrial membrane integrity through interaction with HSPA5. Secreted form does not affect caspase or BAX-mediated intrinsic apoptosis and TNF-induced NF-kappa-B-activity. Secreted form act as an important modulator during neuronal differentiation through interaction with STMN3. Plays a role in the clearance of immune complexes that arise during cell injury. In Ovis aries (Sheep), this protein is Clusterin (CLU).